The following is a 367-amino-acid chain: UDP-N-acetylglucosamine--N-acetylmuramyl-(pentapeptide) pyrophosphoryl-undecaprenol N-acetylglucosamine transferase (367 aa).

Residues 10–12, N124, S196, and Q300 each bind UDP-N-acetyl-alpha-D-glucosamine; that span reads TGG.

It belongs to the glycosyltransferase 28 family. MurG subfamily.

It localises to the cell membrane. It carries out the reaction di-trans,octa-cis-undecaprenyl diphospho-N-acetyl-alpha-D-muramoyl-L-alanyl-D-glutamyl-meso-2,6-diaminopimeloyl-D-alanyl-D-alanine + UDP-N-acetyl-alpha-D-glucosamine = di-trans,octa-cis-undecaprenyl diphospho-[N-acetyl-alpha-D-glucosaminyl-(1-&gt;4)]-N-acetyl-alpha-D-muramoyl-L-alanyl-D-glutamyl-meso-2,6-diaminopimeloyl-D-alanyl-D-alanine + UDP + H(+). It functions in the pathway cell wall biogenesis; peptidoglycan biosynthesis. In terms of biological role, cell wall formation. Catalyzes the transfer of a GlcNAc subunit on undecaprenyl-pyrophosphoryl-MurNAc-pentapeptide (lipid intermediate I) to form undecaprenyl-pyrophosphoryl-MurNAc-(pentapeptide)GlcNAc (lipid intermediate II). The chain is UDP-N-acetylglucosamine--N-acetylmuramyl-(pentapeptide) pyrophosphoryl-undecaprenol N-acetylglucosamine transferase from Natranaerobius thermophilus (strain ATCC BAA-1301 / DSM 18059 / JW/NM-WN-LF).